The primary structure comprises 171 residues: Small ribosomal subunit protein bS16 (171 aa).

The interval 114–171 is disordered; that stretch reads EGGPTTEAAKPKKKAATSGAKKAAKAAEPEAAASEAAEPEAAAAPAEGGEQAESSAES. Residues 142 to 171 show a composition bias toward low complexity; sequence PEAAASEAAEPEAAAAPAEGGEQAESSAES.

It belongs to the bacterial ribosomal protein bS16 family.

The sequence is that of Small ribosomal subunit protein bS16 from Mycolicibacterium paratuberculosis (strain ATCC BAA-968 / K-10) (Mycobacterium paratuberculosis).